The following is a 187-amino-acid chain: Abscisic acid receptor PYL9 (187 aa).

Residues 27–178 form an START-like region; it reads HLCRENQCTS…NLKSLADVSE (152 aa). 2 cysteine pairs are disulfide-bonded: Cys-29–Cys-159 and Cys-34–Cys-159. Abscisate is bound by residues Lys-63, 91 to 96, 118 to 124, and Glu-143; these read ATTSTE and RLKNYSS. Residues 87–91 carry the Gate loop motif; that stretch reads SGLPA. The Latch loop motif lies at 117–119; sequence HRL.

The protein belongs to the PYR/PYL/RCAR abscisic acid intracellular receptor family. Homodimer. Monomer. Binds ABA on one subunit only. Binds to CARs protein in an ABA-independent manner, both at the plasma membrane and in the nucleus. Binds specifically (+)-ABA but not (-)-ABA. Interacts with HAB1, ABI1 and ABI2, and possibly with other PP2Cs. Interacts with TOPP1. Interacts with DDA1. Expressed in root tips, vascular tissues, stomata, flowers, pollen tubes and developing seeds.

It localises to the cytoplasm. The protein localises to the nucleus. Its subcellular location is the cell membrane. Receptor for abscisic acid (ABA) required for ABA-mediated responses such as stomatal closure and germination inhibition. Inhibits the activity of group-A protein phosphatases type 2C (PP2Cs) in an ABA-independent manner but more efficiently when activated by ABA. Confers enhanced sensitivity to ABA. Can be activated only by (+)-ABA but not by (-)-ABA. In Arabidopsis thaliana (Mouse-ear cress), this protein is Abscisic acid receptor PYL9 (PYL9).